The primary structure comprises 335 residues: Biotin synthase (335 aa).

Residues 39–267 form the Radical SAM core domain; the sequence is TKIQVCKLIS…ASDVRLSAGR (229 aa). The [4Fe-4S] cluster site is built by Cys54, Cys58, and Cys61. The [2Fe-2S] cluster site is built by Cys98, Cys130, Cys190, and Arg262.

The protein belongs to the radical SAM superfamily. Biotin synthase family. As to quaternary structure, homodimer. [4Fe-4S] cluster is required as a cofactor. Requires [2Fe-2S] cluster as cofactor.

It catalyses the reaction (4R,5S)-dethiobiotin + (sulfur carrier)-SH + 2 reduced [2Fe-2S]-[ferredoxin] + 2 S-adenosyl-L-methionine = (sulfur carrier)-H + biotin + 2 5'-deoxyadenosine + 2 L-methionine + 2 oxidized [2Fe-2S]-[ferredoxin]. The protein operates within cofactor biosynthesis; biotin biosynthesis; biotin from 7,8-diaminononanoate: step 2/2. Functionally, catalyzes the conversion of dethiobiotin (DTB) to biotin by the insertion of a sulfur atom into dethiobiotin via a radical-based mechanism. The chain is Biotin synthase from Nostoc punctiforme (strain ATCC 29133 / PCC 73102).